The primary structure comprises 421 residues: Large ribosomal subunit protein uL4 (421 aa).

The residue at position 2 (alanine 2) is an N-acetylalanine. Lysine 14 bears the N6-acetyllysine mark. Arginine 97 carries the post-translational modification Omega-N-methylarginine. Lysine 106 carries the post-translational modification N6-acetyllysine. Lysine 239 participates in a covalent cross-link: Glycyl lysine isopeptide (Lys-Gly) (interchain with G-Cter in SUMO2). Lysine 259 carries the post-translational modification N6-acetyllysine. Threonine 266 is modified (phosphothreonine). Serine 290 bears the Phosphoserine mark. The residue at position 300 (arginine 300) is a Citrulline. Lysine 327 participates in a covalent cross-link: Glycyl lysine isopeptide (Lys-Gly) (interchain with G-Cter in SUMO2). Residues lysine 333 and lysine 353 each carry the N6-acetyllysine modification. The disordered stretch occupies residues 359 to 421 (EAKSEEKGVP…PTTEEKKPAA (63 aa)). Lysine 361 bears the N6-acetyllysine; alternate mark. A Glycyl lysine isopeptide (Lys-Gly) (interchain with G-Cter in SUMO1); alternate cross-link involves residue lysine 361. The residue at position 362 (serine 362) is a Phosphoserine. Residues 368 to 391 (PGKKPRRKKGKKTVGVKKPKKPVV) are compositionally biased toward basic residues. The segment covering 401–421 (PAADKKPAEKKPTTEEKKPAA) has biased composition (basic and acidic residues).

This sequence belongs to the universal ribosomal protein uL4 family. Component of the large ribosomal subunit. May bind IPO9 with low affinity. Interacts with RBM3. Post-translationally, citrullinated by PADI4.

Its subcellular location is the cytoplasm. Its function is as follows. Component of the large ribosomal subunit. The ribosome is a large ribonucleoprotein complex responsible for the synthesis of proteins in the cell. This Canis lupus familiaris (Dog) protein is Large ribosomal subunit protein uL4 (RPL4).